Consider the following 282-residue polypeptide: Pantothenate synthetase (282 aa).

30-37 lines the ATP pocket; the sequence is MGNLHEGH. Histidine 37 serves as the catalytic Proton donor. Glutamine 61 is a binding site for (R)-pantoate. Glutamine 61 contributes to the beta-alanine binding site. Residue 148-151 participates in ATP binding; sequence GQKD. Glutamine 154 provides a ligand contact to (R)-pantoate. ATP contacts are provided by residues valine 177 and 185–188; that span reads LSSR.

It belongs to the pantothenate synthetase family. In terms of assembly, homodimer.

It localises to the cytoplasm. The catalysed reaction is (R)-pantoate + beta-alanine + ATP = (R)-pantothenate + AMP + diphosphate + H(+). It functions in the pathway cofactor biosynthesis; (R)-pantothenate biosynthesis; (R)-pantothenate from (R)-pantoate and beta-alanine: step 1/1. Functionally, catalyzes the condensation of pantoate with beta-alanine in an ATP-dependent reaction via a pantoyl-adenylate intermediate. This is Pantothenate synthetase from Acinetobacter baumannii (strain AB0057).